Consider the following 150-residue polypeptide: D-aminoacyl-tRNA deacylase (150 aa).

The Gly-cisPro motif, important for rejection of L-amino acids motif lies at 133-134 (GP).

This sequence belongs to the DTD family. Homodimer.

The protein localises to the cytoplasm. It carries out the reaction glycyl-tRNA(Ala) + H2O = tRNA(Ala) + glycine + H(+). The enzyme catalyses a D-aminoacyl-tRNA + H2O = a tRNA + a D-alpha-amino acid + H(+). Its function is as follows. An aminoacyl-tRNA editing enzyme that deacylates mischarged D-aminoacyl-tRNAs. Also deacylates mischarged glycyl-tRNA(Ala), protecting cells against glycine mischarging by AlaRS. Acts via tRNA-based rather than protein-based catalysis; rejects L-amino acids rather than detecting D-amino acids in the active site. By recycling D-aminoacyl-tRNA to D-amino acids and free tRNA molecules, this enzyme counteracts the toxicity associated with the formation of D-aminoacyl-tRNA entities in vivo and helps enforce protein L-homochirality. This chain is D-aminoacyl-tRNA deacylase, found in Kocuria rhizophila (strain ATCC 9341 / DSM 348 / NBRC 103217 / DC2201).